The sequence spans 220 residues: PKHD-type hydroxylase PCC7424_1929 (220 aa).

The 97-residue stretch at 77 to 173 (KIHSLLFSRY…RLVAVGWVQS (97 aa)) folds into the Fe2OG dioxygenase domain. His95, Asp97, and His154 together coordinate Fe cation. 2-oxoglutarate is bound at residue Arg164.

Requires Fe(2+) as cofactor. The cofactor is L-ascorbate.

This is PKHD-type hydroxylase PCC7424_1929 from Gloeothece citriformis (strain PCC 7424) (Cyanothece sp. (strain PCC 7424)).